Reading from the N-terminus, the 185-residue chain is Ribosome-recycling factor (185 aa).

Belongs to the RRF family.

The protein localises to the cytoplasm. In terms of biological role, responsible for the release of ribosomes from messenger RNA at the termination of protein biosynthesis. May increase the efficiency of translation by recycling ribosomes from one round of translation to another. The protein is Ribosome-recycling factor of Wolbachia sp. subsp. Drosophila simulans (strain wRi).